The primary structure comprises 208 residues: ATP-dependent Clp protease proteolytic subunit (208 aa).

Serine 101 (nucleophile) is an active-site residue. The active site involves histidine 126.

Belongs to the peptidase S14 family. Component of the chloroplastic Clp protease core complex.

The protein resides in the plastid. It is found in the chloroplast stroma. It carries out the reaction Hydrolysis of proteins to small peptides in the presence of ATP and magnesium. alpha-casein is the usual test substrate. In the absence of ATP, only oligopeptides shorter than five residues are hydrolyzed (such as succinyl-Leu-Tyr-|-NHMec, and Leu-Tyr-Leu-|-Tyr-Trp, in which cleavage of the -Tyr-|-Leu- and -Tyr-|-Trp bonds also occurs).. Functionally, cleaves peptides in various proteins in a process that requires ATP hydrolysis. Has a chymotrypsin-like activity. Plays a major role in the degradation of misfolded proteins. In Nephroselmis olivacea (Green alga), this protein is ATP-dependent Clp protease proteolytic subunit.